Here is a 322-residue protein sequence, read N- to C-terminus: Adenine deaminase (322 aa).

Zn(2+) contacts are provided by His-11, His-13, and His-189. Glu-192 (proton donor) is an active-site residue. Asp-270 contacts Zn(2+). Substrate is bound at residue Asp-271.

This sequence belongs to the metallo-dependent hydrolases superfamily. Adenosine and AMP deaminases family. Adenine deaminase type 2 subfamily. Zn(2+) is required as a cofactor.

The catalysed reaction is adenine + H2O + H(+) = hypoxanthine + NH4(+). In terms of biological role, catalyzes the hydrolytic deamination of adenine to hypoxanthine. Plays an important role in the purine salvage pathway and in nitrogen catabolism. The sequence is that of Adenine deaminase from Rhizobium etli (strain ATCC 51251 / DSM 11541 / JCM 21823 / NBRC 15573 / CFN 42).